Consider the following 346-residue polypeptide: tRNA N6-adenosine threonylcarbamoyltransferase (346 aa).

Residues His111 and His115 each contribute to the Fe cation site. Substrate is bound by residues 134–138 (LVSGG), Asp167, Gly180, and Asn277. Residue Asp305 coordinates Fe cation.

Belongs to the KAE1 / TsaD family. Fe(2+) is required as a cofactor.

It localises to the cytoplasm. The catalysed reaction is L-threonylcarbamoyladenylate + adenosine(37) in tRNA = N(6)-L-threonylcarbamoyladenosine(37) in tRNA + AMP + H(+). Required for the formation of a threonylcarbamoyl group on adenosine at position 37 (t(6)A37) in tRNAs that read codons beginning with adenine. Is involved in the transfer of the threonylcarbamoyl moiety of threonylcarbamoyl-AMP (TC-AMP) to the N6 group of A37, together with TsaE and TsaB. TsaD likely plays a direct catalytic role in this reaction. The chain is tRNA N6-adenosine threonylcarbamoyltransferase from Bordetella pertussis (strain Tohama I / ATCC BAA-589 / NCTC 13251).